Consider the following 153-residue polypeptide: Ubiquitin-conjugating enzyme E2 36 (153 aa).

Residues 5–151 form the UBC core domain; it reads NLPRRIIKET…AKEWTRLYAS (147 aa). Cys89 acts as the Glycyl thioester intermediate in catalysis.

It belongs to the ubiquitin-conjugating enzyme family. In terms of assembly, interacts with yeast and human Mms2, with the RING domain of RGLG2 and with UEV1A, UEV1B, UEV1C and UEV1D. As to expression, ubiquitously expressed at low level.

The enzyme catalyses S-ubiquitinyl-[E1 ubiquitin-activating enzyme]-L-cysteine + [E2 ubiquitin-conjugating enzyme]-L-cysteine = [E1 ubiquitin-activating enzyme]-L-cysteine + S-ubiquitinyl-[E2 ubiquitin-conjugating enzyme]-L-cysteine.. The protein operates within protein modification; protein ubiquitination. In terms of biological role, catalyzes the synthesis of non-canonical poly-ubiquitin chains that are linked through 'Lys-63'. This type of poly-ubiquitination does not lead to protein degradation by the proteasome. Mediates transcriptional activation of target genes. Required for postreplication repair of UV-damaged DNA and for adapting root developmental programs to suboptimal availability of iron. This is Ubiquitin-conjugating enzyme E2 36 (UBC36) from Arabidopsis thaliana (Mouse-ear cress).